Consider the following 772-residue polypeptide: Cadherin-19 (772 aa).

Positions M1–G21 are cleaved as a signal peptide. A propeptide spanning residues A22 to R43 is cleaved from the precursor. 5 consecutive Cadherin domains span residues G44–F148, L149–F256, K257–F370, L371–F470, and F470–T581. Residues G44–E596 lie on the Extracellular side of the membrane. Residues N57 and N74 are each glycosylated (N-linked (GlcNAc...) asparagine). N-linked (GlcNAc...) asparagine glycosylation is found at N419, N437, N508, N515, N516, and N534. A helical membrane pass occupies residues V597 to G617. The Cytoplasmic portion of the chain corresponds to L618–N772.

As to expression, expressed in many tissues, with the exception of uterus.

It localises to the cell membrane. Cadherins are calcium-dependent cell adhesion proteins. They preferentially interact with themselves in a homophilic manner in connecting cells; cadherins may thus contribute to the sorting of heterogeneous cell types. This chain is Cadherin-19 (CDH19), found in Homo sapiens (Human).